A 488-amino-acid chain; its full sequence is Ribulose bisphosphate carboxylase large chain (488 aa).

Substrate contacts are provided by N127 and T177. K179 functions as the Proton acceptor in the catalytic mechanism. K181 lines the substrate pocket. Residues K205, D207, and E208 each coordinate Mg(2+). K205 carries the post-translational modification N6-carboxylysine. Residue H297 is the Proton acceptor of the active site. The substrate site is built by R298, H330, and S382.

Belongs to the RuBisCO large chain family. Type I subfamily. In terms of assembly, heterohexadecamer of 8 large chains and 8 small chains. It depends on Mg(2+) as a cofactor.

It localises to the plastid. It is found in the chloroplast. It catalyses the reaction 2 (2R)-3-phosphoglycerate + 2 H(+) = D-ribulose 1,5-bisphosphate + CO2 + H2O. It carries out the reaction D-ribulose 1,5-bisphosphate + O2 = 2-phosphoglycolate + (2R)-3-phosphoglycerate + 2 H(+). Its function is as follows. RuBisCO catalyzes two reactions: the carboxylation of D-ribulose 1,5-bisphosphate, the primary event in carbon dioxide fixation, as well as the oxidative fragmentation of the pentose substrate in the photorespiration process. Both reactions occur simultaneously and in competition at the same active site. This Antithamnion sp. (Red alga) protein is Ribulose bisphosphate carboxylase large chain.